Here is a 354-residue protein sequence, read N- to C-terminus: Neutral protease 2 homolog MEP3 (354 aa).

The first 19 residues, Met-1–Ala-19, serve as a signal peptide directing secretion. Positions Phe-20 to Arg-179 are excised as a propeptide. Intrachain disulfides connect Cys-186/Cys-256 and Cys-263/Cys-281. His-305 serves as a coordination point for Zn(2+). The active site involves Glu-306. Zn(2+) contacts are provided by His-309 and Asp-320.

This sequence belongs to the peptidase M35 family. It depends on Zn(2+) as a cofactor.

It is found in the secreted. The catalysed reaction is Preferential cleavage of bonds with hydrophobic residues in P1'. Also 3-Asn-|-Gln-4 and 8-Gly-|-Ser-9 bonds in insulin B chain.. Secreted metalloproteinase that allows assimilation of proteinaceous substrates. Shows high activities on basic nuclear substrates such as histone and protamine. May be involved in virulence. This chain is Neutral protease 2 homolog MEP3 (MEP3), found in Coccidioides posadasii (strain C735) (Valley fever fungus).